The sequence spans 279 residues: Energy-coupling factor transporter ATP-binding protein EcfA1 (279 aa).

In terms of domain architecture, ABC transporter spans 6 to 240 (VRLEHVFYKY…ADAMRAIGLG (235 aa)). Residue 40–47 (GHNGSGKS) coordinates ATP.

This sequence belongs to the ABC transporter superfamily. Energy-coupling factor EcfA family. Forms a stable energy-coupling factor (ECF) transporter complex composed of 2 membrane-embedded substrate-binding proteins (S component), 2 ATP-binding proteins (A component) and 2 transmembrane proteins (T component).

The protein localises to the cell membrane. Functionally, ATP-binding (A) component of a common energy-coupling factor (ECF) ABC-transporter complex. Unlike classic ABC transporters this ECF transporter provides the energy necessary to transport a number of different substrates. The chain is Energy-coupling factor transporter ATP-binding protein EcfA1 from Listeria innocua serovar 6a (strain ATCC BAA-680 / CLIP 11262).